We begin with the raw amino-acid sequence, 299 residues long: Acetylglutamate kinase (299 aa).

Residues 70-71 (GG), Arg92, and Asn186 each bind substrate.

Belongs to the acetylglutamate kinase family. ArgB subfamily.

Its subcellular location is the cytoplasm. It catalyses the reaction N-acetyl-L-glutamate + ATP = N-acetyl-L-glutamyl 5-phosphate + ADP. It functions in the pathway amino-acid biosynthesis; L-arginine biosynthesis; N(2)-acetyl-L-ornithine from L-glutamate: step 2/4. In terms of biological role, catalyzes the ATP-dependent phosphorylation of N-acetyl-L-glutamate. This chain is Acetylglutamate kinase, found in Caldanaerobacter subterraneus subsp. tengcongensis (strain DSM 15242 / JCM 11007 / NBRC 100824 / MB4) (Thermoanaerobacter tengcongensis).